The primary structure comprises 271 residues: Adenosylcobinamide-GDP ribazoletransferase (271 aa).

Helical transmembrane passes span 4–24 (FLLALRTTFGFLSTIPVGMSM), 35–55 (YLQTFAGIVLGSMIGIFAYLT), 58–78 (FLPSTISAVLIMVFIYYITGL), 108–128 (SLGIGGVSYTVLALIALYASI), 135–155 (VLFFSDNAALIIAISLLIAEI), 192–212 (FVLGALVCVLAFGTLGIIGYI), and 246–266 (IIVLMVLTVAITAVNNGYGGL).

The protein belongs to the CobS family. The cofactor is Mg(2+).

Its subcellular location is the cell membrane. It carries out the reaction alpha-ribazole + adenosylcob(III)inamide-GDP = adenosylcob(III)alamin + GMP + H(+). The catalysed reaction is alpha-ribazole 5'-phosphate + adenosylcob(III)inamide-GDP = adenosylcob(III)alamin 5'-phosphate + GMP + H(+). It participates in cofactor biosynthesis; adenosylcobalamin biosynthesis; adenosylcobalamin from cob(II)yrinate a,c-diamide: step 7/7. Its function is as follows. Joins adenosylcobinamide-GDP and alpha-ribazole to generate adenosylcobalamin (Ado-cobalamin). Also synthesizes adenosylcobalamin 5'-phosphate from adenosylcobinamide-GDP and alpha-ribazole 5'-phosphate. The polypeptide is Adenosylcobinamide-GDP ribazoletransferase (Methanococcoides burtonii (strain DSM 6242 / NBRC 107633 / OCM 468 / ACE-M)).